A 912-amino-acid polypeptide reads, in one-letter code: Type II beta methyltransferase M.BslI (912 aa).

This sequence belongs to the N(4)/N(6)-methyltransferase family. N(4) subfamily.

It carries out the reaction a 2'-deoxycytidine in DNA + S-adenosyl-L-methionine = an N(4)-methyl-2'-deoxycytidine in DNA + S-adenosyl-L-homocysteine + H(+). Its function is as follows. A beta subtype methylase. Recognizes the double-stranded sequence 5'-CCN(7)GG-3', methylates C-2 on both strands, and protects the DNA from cleavage by the BslI endonuclease. This Bacillus sp. (strain NEB-606) protein is Type II beta methyltransferase M.BslI (bslIM).